The following is a 309-amino-acid chain: Sulfate adenylyltransferase subunit 2 (309 aa).

Belongs to the PAPS reductase family. CysD subfamily. Heterodimer composed of CysD, the smaller subunit, and CysN.

The enzyme catalyses sulfate + ATP + H(+) = adenosine 5'-phosphosulfate + diphosphate. It participates in sulfur metabolism; hydrogen sulfide biosynthesis; sulfite from sulfate: step 1/3. In terms of biological role, with CysN forms the ATP sulfurylase (ATPS) that catalyzes the adenylation of sulfate producing adenosine 5'-phosphosulfate (APS) and diphosphate, the first enzymatic step in sulfur assimilation pathway. APS synthesis involves the formation of a high-energy phosphoric-sulfuric acid anhydride bond driven by GTP hydrolysis by CysN coupled to ATP hydrolysis by CysD. This chain is Sulfate adenylyltransferase subunit 2, found in Mycobacterium sp. (strain KMS).